A 582-amino-acid polypeptide reads, in one-letter code: ATP-dependent lipid A-core flippase (582 aa).

A run of 6 helical transmembrane segments spans residues 27 to 48 (LVVSTIALVINAAADTYMISLL), 63 to 85 (FLRILPFMILGLMFVRGLSGFAS), 144 to 168 (VSIVREGASIIGLLTLMFWNSWQLS), 170 to 188 (VLIVVAPVVAFAISFVSKR), 244 to 266 (LVSAQSIADPVIQMIASLALFAV), and 283 to 302 (TFTVVFSAMFGLMRPLKALT). An ABC transmembrane type-1 domain is found at 28 to 310 (VVSTIALVIN…LTSVTSEFQR (283 aa)). In terms of domain architecture, ABC transporter spans 342 to 578 (VDVKDVTFTY…DGAYAQLHRI (237 aa)). Residue 376–383 (GRSGSGKS) coordinates ATP.

Belongs to the ABC transporter superfamily. Lipid exporter (TC 3.A.1.106) family. As to quaternary structure, homodimer.

It localises to the cell inner membrane. It catalyses the reaction ATP + H2O + lipid A-core oligosaccharideSide 1 = ADP + phosphate + lipid A-core oligosaccharideSide 2.. Functionally, involved in lipopolysaccharide (LPS) biosynthesis. Translocates lipid A-core from the inner to the outer leaflet of the inner membrane. Transmembrane domains (TMD) form a pore in the inner membrane and the ATP-binding domain (NBD) is responsible for energy generation. Shows ATPase activity. This is ATP-dependent lipid A-core flippase from Vibrio cholerae serotype O1 (strain ATCC 39315 / El Tor Inaba N16961).